The primary structure comprises 501 residues: Armadillo repeat-containing protein 6 (501 aa).

A Phosphoserine modification is found at serine 64. ARM repeat units lie at residues 220-264 (GVLP…HAHN), 274-318 (KGLK…DLGG), 319-369 (LSIL…RAGG), and 370-412 (TESI…VEGG). Histidine 263 carries the post-translational modification Pros-methylhistidine.

It belongs to the ARMC6 family. Methylated at His-263 by METTL9.

The polypeptide is Armadillo repeat-containing protein 6 (ARMC6) (Pongo abelii (Sumatran orangutan)).